A 419-amino-acid polypeptide reads, in one-letter code: LanC-like protein 3 homolog (419 aa).

It belongs to the LanC-like protein family.

In Drosophila melanogaster (Fruit fly), this protein is LanC-like protein 3 homolog.